Here is a 610-residue protein sequence, read N- to C-terminus: Elongation factor 4 (610 aa).

Positions 11–193 (ENIRNFSIIA…QIVEKVPAPS (183 aa)) constitute a tr-type G domain. GTP is bound by residues 23–28 (DHGKST) and 140–143 (NKID).

Belongs to the TRAFAC class translation factor GTPase superfamily. Classic translation factor GTPase family. LepA subfamily.

It is found in the cell membrane. The enzyme catalyses GTP + H2O = GDP + phosphate + H(+). In terms of biological role, required for accurate and efficient protein synthesis under certain stress conditions. May act as a fidelity factor of the translation reaction, by catalyzing a one-codon backward translocation of tRNAs on improperly translocated ribosomes. Back-translocation proceeds from a post-translocation (POST) complex to a pre-translocation (PRE) complex, thus giving elongation factor G a second chance to translocate the tRNAs correctly. Binds to ribosomes in a GTP-dependent manner. The polypeptide is Elongation factor 4 (Streptococcus equi subsp. zooepidemicus (strain MGCS10565)).